We begin with the raw amino-acid sequence, 249 residues long: General transcription factor IIF subunit 2 (249 aa).

Ala-2 carries the post-translational modification N-acetylalanine. Lys-22, Lys-33, and Lys-137 each carry N6-acetyllysine. At Ser-142 the chain carries Phosphoserine. DNA contacts are provided by Gly-227 and His-229. Ser-248 is modified (phosphoserine).

The protein belongs to the TFIIF beta subunit family. In terms of assembly, heterodimer of an alpha and a beta subunit. Interacts with HTATSF1 and GPBP1. Interacts with URI1. Interacts with GTF2B (via N-terminus); this interaction is inhibited in presence of GTF2F1. Part of TBP-based Pol II pre-initiation complex (PIC), in which Pol II core assembles with general transcription factors and other specific initiation factors including GTF2E1, GTF2E2, GTF2F1, GTF2F2, TCEA1, ERCC2, ERCC3, GTF2H2, GTF2H3, GTF2H4, GTF2H5, GTF2A1, GTF2A2, GTF2B and TBP; this large multi-subunit PIC complex mediates DNA unwinding and targets Pol II core to the transcription start site where the first phosphodiester bond forms.

It is found in the nucleus. TFIIF is a general transcription initiation factor that binds to RNA polymerase II and helps to recruit it to the initiation complex in collaboration with TFIIB. The protein is General transcription factor IIF subunit 2 (GTF2F2) of Homo sapiens (Human).